A 252-amino-acid polypeptide reads, in one-letter code: 2-succinyl-6-hydroxy-2,4-cyclohexadiene-1-carboxylate synthase (252 aa).

Belongs to the AB hydrolase superfamily. MenH family. Monomer.

The catalysed reaction is 5-enolpyruvoyl-6-hydroxy-2-succinyl-cyclohex-3-ene-1-carboxylate = (1R,6R)-6-hydroxy-2-succinyl-cyclohexa-2,4-diene-1-carboxylate + pyruvate. The protein operates within quinol/quinone metabolism; 1,4-dihydroxy-2-naphthoate biosynthesis; 1,4-dihydroxy-2-naphthoate from chorismate: step 3/7. Its pathway is quinol/quinone metabolism; menaquinone biosynthesis. Catalyzes a proton abstraction reaction that results in 2,5-elimination of pyruvate from 2-succinyl-5-enolpyruvyl-6-hydroxy-3-cyclohexene-1-carboxylate (SEPHCHC) and the formation of 2-succinyl-6-hydroxy-2,4-cyclohexadiene-1-carboxylate (SHCHC). The protein is 2-succinyl-6-hydroxy-2,4-cyclohexadiene-1-carboxylate synthase of Shigella sonnei (strain Ss046).